The following is a 236-amino-acid chain: Leucyl/phenylalanyl-tRNA--protein transferase (236 aa).

This sequence belongs to the L/F-transferase family.

Its subcellular location is the cytoplasm. It carries out the reaction N-terminal L-lysyl-[protein] + L-leucyl-tRNA(Leu) = N-terminal L-leucyl-L-lysyl-[protein] + tRNA(Leu) + H(+). The catalysed reaction is N-terminal L-arginyl-[protein] + L-leucyl-tRNA(Leu) = N-terminal L-leucyl-L-arginyl-[protein] + tRNA(Leu) + H(+). The enzyme catalyses L-phenylalanyl-tRNA(Phe) + an N-terminal L-alpha-aminoacyl-[protein] = an N-terminal L-phenylalanyl-L-alpha-aminoacyl-[protein] + tRNA(Phe). Functions in the N-end rule pathway of protein degradation where it conjugates Leu, Phe and, less efficiently, Met from aminoacyl-tRNAs to the N-termini of proteins containing an N-terminal arginine or lysine. This is Leucyl/phenylalanyl-tRNA--protein transferase from Shewanella putrefaciens (strain CN-32 / ATCC BAA-453).